We begin with the raw amino-acid sequence, 234 residues long: Ribonuclease HII (234 aa).

Residues 47 to 234 enclose the RNase H type-2 domain; it reads IRIAGVDEVG…KTVHKILYQE (188 aa). Positions 53, 54, and 144 each coordinate a divalent metal cation.

The protein belongs to the RNase HII family. Mn(2+) is required as a cofactor. Mg(2+) serves as cofactor.

The protein localises to the cytoplasm. The enzyme catalyses Endonucleolytic cleavage to 5'-phosphomonoester.. Functionally, endonuclease that specifically degrades the RNA of RNA-DNA hybrids. The chain is Ribonuclease HII from Ruegeria pomeroyi (strain ATCC 700808 / DSM 15171 / DSS-3) (Silicibacter pomeroyi).